The following is a 315-amino-acid chain: tRNA wybutosine-synthesizing protein 5 (315 aa).

The 166-residue stretch at 102–267 folds into the JmjC domain; that stretch reads DEKYYLRSLG…YDTTDTYGNK (166 aa). Tyr-106 contributes to the 2-oxoglutarate binding site. Fe cation-binding residues include His-160 and Asp-162. Residues Asn-166 and Lys-175 each contribute to the 2-oxoglutarate site. Position 235 (His-235) interacts with Fe cation.

This sequence belongs to the TYW5 family. Homodimer. Requires Fe(2+) as cofactor.

The enzyme catalyses 7-[(3S)-3-amino-3-carboxypropyl]wyosine(37) in tRNA(Phe) + 2-oxoglutarate + O2 = 7-(2-hydroxy-3-amino-3-carboxypropyl)wyosine(37) in tRNA(Phe) + succinate + CO2. It functions in the pathway tRNA modification; wybutosine-tRNA(Phe) biosynthesis. Functionally, tRNA hydroxylase that acts as a component of the wybutosine biosynthesis pathway. Wybutosine is a hyper modified guanosine with a tricyclic base found at the 3'-position adjacent to the anticodon of eukaryotic phenylalanine tRNA. Catalyzes the hydroxylation of 7-(a-amino-a-carboxypropyl)wyosine (yW-72) into undermodified hydroxywybutosine (OHyW*). OHyW* being further transformed into hydroxywybutosine (OHyW) by LCMT2/TYW4. OHyW is a derivative of wybutosine found in higher eukaryotes. This Mus musculus (Mouse) protein is tRNA wybutosine-synthesizing protein 5 (Tyw5).